A 230-amino-acid chain; its full sequence is Ribose-5-phosphate isomerase A (230 aa).

Residues 29–32 (TGST), 85–88 (DGAD), and 99–102 (KGAG) contribute to the substrate site. Catalysis depends on Glu-108, which acts as the Proton acceptor. A substrate-binding site is contributed by Lys-126.

The protein belongs to the ribose 5-phosphate isomerase family. Homodimer.

It catalyses the reaction aldehydo-D-ribose 5-phosphate = D-ribulose 5-phosphate. It participates in carbohydrate degradation; pentose phosphate pathway; D-ribose 5-phosphate from D-ribulose 5-phosphate (non-oxidative stage): step 1/1. Catalyzes the reversible conversion of ribose-5-phosphate to ribulose 5-phosphate. The protein is Ribose-5-phosphate isomerase A of Synechococcus sp. (strain JA-3-3Ab) (Cyanobacteria bacterium Yellowstone A-Prime).